The sequence spans 475 residues: D(1B) dopamine receptor (475 aa).

At 1-38 (MLPPGRNRTAQPARLGLQRQLAQVDAPAGSATPLGPAQ) the chain is on the extracellular side. N-linked (GlcNAc...) asparagine glycosylation is present at Asn-7. Residues 39 to 64 (VVTAGLLTLLIVWTLLGNVLVCAAIV) form a helical membrane-spanning segment. Over 65–75 (RSRHLRAKMTN) the chain is Cytoplasmic. Residues 76–102 (IFIVSLAVSDLFVALLVMPWKAVAEVA) traverse the membrane as a helical segment. Residues 103–111 (GYWPFGTFC) are Extracellular-facing. Cys-111 and Cys-211 are joined by a disulfide. A helical membrane pass occupies residues 112–134 (DIWVAFDIMCSTASILNLCIISV). Over 135–153 (DRYWAISRPFRYERKMTQR) the chain is Cytoplasmic. A helical membrane pass occupies residues 154–179 (VALVMVGLAWTLSILISFIPVQLNWH). The Extracellular portion of the chain corresponds to 180–215 (RDKAGSQGQEGLLSNGTPWEEGWELEGRTENCDSSL). The chain crosses the membrane as a helical span at residues 216-240 (NRTYAISSSLISFYIPVAIMIVTYT). The Cytoplasmic portion of the chain corresponds to 241 to 289 (RIYRIAQVQIRRISSLERAAEHAQSCRSRGAYEPDPSLRASIKKETKVF). The helical transmembrane segment at 290-317 (KTLSMIMGVFVCCWLPFFILNCMVPFCS) threads the bilayer. The Extracellular segment spans residues 318–335 (SGDAEGPKTGFPCVSETT). A helical membrane pass occupies residues 336-357 (FDIFVWFGWANSSLNPIIYAFN). Residues 358–475 (ADFRKVFAQL…LTPNCFDKTA (118 aa)) lie on the Cytoplasmic side of the membrane. Cys-370 carries S-palmitoyl cysteine lipidation. Residues 415-443 (SGDREVGEEEEEGPFDHMSQISPTTPDGD) are disordered.

This sequence belongs to the G-protein coupled receptor 1 family. As to expression, brain, in the lateral mammillary nuclei, the anterior pretectal nuclei, and several layers of the hippocampus.

It is found in the cell membrane. Functionally, dopamine receptor whose activity is mediated by G proteins which activate adenylyl cyclase. The sequence is that of D(1B) dopamine receptor (Drd5) from Rattus norvegicus (Rat).